A 54-amino-acid polypeptide reads, in one-letter code: UPF0434 protein BCI_0256 (54 aa).

Belongs to the UPF0434 family.

The sequence is that of UPF0434 protein BCI_0256 from Baumannia cicadellinicola subsp. Homalodisca coagulata.